Reading from the N-terminus, the 124-residue chain is UPF0225 protein SCO1677 (124 aa).

Belongs to the UPF0225 family.

The sequence is that of UPF0225 protein SCO1677 from Streptomyces coelicolor (strain ATCC BAA-471 / A3(2) / M145).